Consider the following 411-residue polypeptide: Dual-specificity RNA methyltransferase RlmN (411 aa).

Glu-124 (proton acceptor) is an active-site residue. The Radical SAM core domain maps to 130-379 (EEGRGTLCIS…IRTPRGRDIL (250 aa)). The cysteines at positions 137 and 382 are disulfide-linked. [4Fe-4S] cluster-binding residues include Cys-144, Cys-148, and Cys-151. Residues 208–209 (GE), Ser-240, 262–264 (SLH), and Asn-339 contribute to the S-adenosyl-L-methionine site. Cys-382 (S-methylcysteine intermediate) is an active-site residue.

It belongs to the radical SAM superfamily. RlmN family. [4Fe-4S] cluster serves as cofactor.

Its subcellular location is the cytoplasm. The catalysed reaction is adenosine(2503) in 23S rRNA + 2 reduced [2Fe-2S]-[ferredoxin] + 2 S-adenosyl-L-methionine = 2-methyladenosine(2503) in 23S rRNA + 5'-deoxyadenosine + L-methionine + 2 oxidized [2Fe-2S]-[ferredoxin] + S-adenosyl-L-homocysteine. It catalyses the reaction adenosine(37) in tRNA + 2 reduced [2Fe-2S]-[ferredoxin] + 2 S-adenosyl-L-methionine = 2-methyladenosine(37) in tRNA + 5'-deoxyadenosine + L-methionine + 2 oxidized [2Fe-2S]-[ferredoxin] + S-adenosyl-L-homocysteine. Specifically methylates position 2 of adenine 2503 in 23S rRNA and position 2 of adenine 37 in tRNAs. m2A2503 modification seems to play a crucial role in the proofreading step occurring at the peptidyl transferase center and thus would serve to optimize ribosomal fidelity. This Sinorhizobium fredii (strain NBRC 101917 / NGR234) protein is Dual-specificity RNA methyltransferase RlmN.